Consider the following 90-residue polypeptide: MAVKIRLKRMGAKKSPFYRVVVADSRSPRDGRFIEEIGTYNPVAQPAEVKIDEEAALKWLGNGAKPSDTVRNLFSSQGIMEKFHLSKQGK.

This sequence belongs to the bacterial ribosomal protein bS16 family.

The protein is Small ribosomal subunit protein bS16 of Bacillus cytotoxicus (strain DSM 22905 / CIP 110041 / 391-98 / NVH 391-98).